A 787-amino-acid chain; its full sequence is Protein translocase subunit SecA (787 aa).

ATP is bound by residues Q85, 103 to 107 (GEGKT), and D492.

It belongs to the SecA family. Monomer and homodimer. Part of the essential Sec protein translocation apparatus which comprises SecA, SecYEG and auxiliary proteins SecDF. Other proteins may also be involved.

It is found in the cell membrane. Its subcellular location is the cytoplasm. It catalyses the reaction ATP + H2O + cellular proteinSide 1 = ADP + phosphate + cellular proteinSide 2.. Its function is as follows. Part of the Sec protein translocase complex. Interacts with the SecYEG preprotein conducting channel. Has a central role in coupling the hydrolysis of ATP to the transfer of proteins into and across the cell membrane, serving as an ATP-driven molecular motor driving the stepwise translocation of polypeptide chains across the membrane. This Latilactobacillus sakei subsp. sakei (strain 23K) (Lactobacillus sakei subsp. sakei) protein is Protein translocase subunit SecA.